The following is a 469-amino-acid chain: Adenosylhomocysteinase (469 aa).

Residues Thr-63, Asp-139, and Glu-164 each coordinate substrate. An NAD(+)-binding site is contributed by 165 to 167; that stretch reads TTT. Positions 194 and 198 each coordinate substrate. NAD(+) is bound by residues Asn-199, 228 to 233, Glu-251, Asn-300, 321 to 323, and Asn-375; these read GYGDVG and IGH.

The protein belongs to the adenosylhomocysteinase family. NAD(+) is required as a cofactor.

It is found in the cytoplasm. The catalysed reaction is S-adenosyl-L-homocysteine + H2O = L-homocysteine + adenosine. Its pathway is amino-acid biosynthesis; L-homocysteine biosynthesis; L-homocysteine from S-adenosyl-L-homocysteine: step 1/1. May play a key role in the regulation of the intracellular concentration of adenosylhomocysteine. This Pseudomonas entomophila (strain L48) protein is Adenosylhomocysteinase.